Consider the following 907-residue polypeptide: Protein translocase subunit SecA (907 aa).

Residues Gln87, 105 to 109 (GEGKT), and Asp512 each bind ATP. Residues 869 to 897 (AESLSAHTPVVREGEKVGRNDPCPCGSGR) form a disordered region. Basic and acidic residues predominate over residues 878-887 (VVREGEKVGR). The Zn(2+) site is built by Cys891, Cys893, Cys902, and His903.

The protein belongs to the SecA family. In terms of assembly, monomer and homodimer. Part of the essential Sec protein translocation apparatus which comprises SecA, SecYEG and auxiliary proteins SecDF-YajC and YidC. Zn(2+) is required as a cofactor.

The protein localises to the cell inner membrane. It localises to the cytoplasm. The catalysed reaction is ATP + H2O + cellular proteinSide 1 = ADP + phosphate + cellular proteinSide 2.. Its function is as follows. Part of the Sec protein translocase complex. Interacts with the SecYEG preprotein conducting channel. Has a central role in coupling the hydrolysis of ATP to the transfer of proteins into and across the cell membrane, serving both as a receptor for the preprotein-SecB complex and as an ATP-driven molecular motor driving the stepwise translocation of polypeptide chains across the membrane. The polypeptide is Protein translocase subunit SecA (Shewanella sediminis (strain HAW-EB3)).